Consider the following 141-residue polypeptide: MAKKVVKTVKLQIPAGKANPAPPVGPALGQAQVNIPSFCSQFNETTKDQMGFVIPVIISVYEDRTFTFVTKTPPASDLLKKAAKIESGSANASQTKVATITHKQVEEIANLKLSDLNAYCVEKACKIIEGTARNMGILVKD.

Belongs to the universal ribosomal protein uL11 family. In terms of assembly, part of the ribosomal stalk of the 50S ribosomal subunit. Interacts with L10 and the large rRNA to form the base of the stalk. L10 forms an elongated spine to which L12 dimers bind in a sequential fashion forming a multimeric L10(L12)X complex. Post-translationally, one or more lysine residues are methylated.

In terms of biological role, forms part of the ribosomal stalk which helps the ribosome interact with GTP-bound translation factors. This chain is Large ribosomal subunit protein uL11, found in Aster yellows witches'-broom phytoplasma (strain AYWB).